The following is a 182-amino-acid chain: NADH-quinone oxidoreductase subunit C 2 (182 aa).

Residues 153–182 form a disordered region; it reads YKDKLNPFGAEGPPPTQPDLATNDIPQGGR.

The protein belongs to the complex I 30 kDa subunit family. As to quaternary structure, NDH-1 is composed of 14 different subunits. Subunits NuoB, C, D, E, F, and G constitute the peripheral sector of the complex.

Its subcellular location is the cell inner membrane. The catalysed reaction is a quinone + NADH + 5 H(+)(in) = a quinol + NAD(+) + 4 H(+)(out). In terms of biological role, NDH-1 shuttles electrons from NADH, via FMN and iron-sulfur (Fe-S) centers, to quinones in the respiratory chain. The immediate electron acceptor for the enzyme in this species is believed to be ubiquinone. Couples the redox reaction to proton translocation (for every two electrons transferred, four hydrogen ions are translocated across the cytoplasmic membrane), and thus conserves the redox energy in a proton gradient. This Rhizobium meliloti (strain 1021) (Ensifer meliloti) protein is NADH-quinone oxidoreductase subunit C 2.